A 505-amino-acid polypeptide reads, in one-letter code: MRTPKPVVLTILDGWGLNEDTSSNAPVLANTPTMDRLFATCPNATLTTFGPNVGLPTGQMGNSEVGHTNIGAGRIVAMDLGQIDLAIEDGSFFRNAAMLDFAATVKAAGGVAHLMCVVSDGGVHGHILHGQAAVKLMVSHGLKVVVHAITDGRDVAPQSAEDFVAALVASLPQGASIGTVIGRYYAMDRDNRWERVEKAYDAMVLGKGEHARDAVSAVAQSYANKVTDEFILPTVIDGYEGFKAGDGLFCLNFRADRAREILLAIGADDFDGFAREKPVLSALLGMVEYSTRHSDFMTTAYPKRDIVNTLGAWVAKQGLTQFRLAETEKYPHVTFFLNGGKEEPEVGEDRFMPKSPKVATYDLQPEMSAAEVTEKFVEVIGKGYDLIVTNYANPDMVGHTGDLQAAIKACEAVDRGLGAVVAALEKVGGAMLVIADHGNCETMVDPVTGGPHTAHTTNPVPVILFGGPEGAKVHDGILADVAPTLLQLMNVPLPPEMTGKSLIDL.

Asp-13 and Ser-63 together coordinate Mn(2+). Ser-63 (phosphoserine intermediate) is an active-site residue. Substrate contacts are provided by residues His-124, 153–154, Arg-183, Arg-189, 254–257, and Lys-329; these read RD and RADR. Asp-395, His-399, Asp-436, His-437, and His-455 together coordinate Mn(2+).

Belongs to the BPG-independent phosphoglycerate mutase family. As to quaternary structure, monomer. It depends on Mn(2+) as a cofactor.

The catalysed reaction is (2R)-2-phosphoglycerate = (2R)-3-phosphoglycerate. It participates in carbohydrate degradation; glycolysis; pyruvate from D-glyceraldehyde 3-phosphate: step 3/5. Functionally, catalyzes the interconversion of 2-phosphoglycerate and 3-phosphoglycerate. The chain is 2,3-bisphosphoglycerate-independent phosphoglycerate mutase from Agrobacterium fabrum (strain C58 / ATCC 33970) (Agrobacterium tumefaciens (strain C58)).